We begin with the raw amino-acid sequence, 276 residues long: MLEQEENGLFEIPDYEHVEDETFPPFPPPGSPERDPAEAEPDEGSGAPVPVPPKRIVKRNIPKLDATRLTSERGLPALRHVFDKTKFKGKGHEAEDLKTLIRHMEHWAHRLFPKLQFEDFIDRVENLGNKKEVQTCLKRIRLDLPIVHEDFVNNNDEVEETNSLDAAATGFDAFVTSSSDSKRFASEASRNLTEEQQQRIEKNKQLALERRQAKLLSNSQSLENDVTVEESSTGENQEESNGLISADGPHDVPSASTQEEGQLEAEETQLDHPNLD.

The segment at 1 to 54 (MLEQEENGLFEIPDYEHVEDETFPPFPPPGSPERDPAEAEPDEGSGAPVPVPPK) is disordered. Positions 64-140 (LDATRLTSER…KEVQTCLKRI (77 aa)) are interaction with TIMELESS. Polar residues predominate over residues 217–243 (SNSQSLENDVTVEESSTGENQEESNGL). The segment at 217 to 276 (SNSQSLENDVTVEESSTGENQEESNGLISADGPHDVPSASTQEEGQLEAEETQLDHPNLD) is disordered. Ser-219 is subject to Phosphoserine. Position 233 is a phosphothreonine (Thr-233).

This sequence belongs to the CSM3 family. As to quaternary structure, interacts with TIMELESS, which impairs TIMELESS self-association (via N-terminus). Associates with the MCM2-7 complex. Interacts with RPA2, PRDX2.

The protein localises to the cytoplasm. Its subcellular location is the nucleus. In terms of biological role, plays an important role in the control of DNA replication and the maintenance of replication fork stability. Important for cell survival after DNA damage or replication stress. May be specifically required for the ATR-CHEK1 pathway in the replication checkpoint induced by hydroxyurea or ultraviolet light. Forms a complex with TIMELESS and this complex regulates DNA replication processes under both normal and stress conditions, stabilizes replication forks and influences both CHEK1 phosphorylation and the intra-S phase checkpoint in response to genotoxic stress. This is TIMELESS-interacting protein (Tipin) from Rattus norvegicus (Rat).